The following is a 397-amino-acid chain: CCA-adding enzyme (397 aa).

Gly-26 and Arg-29 together coordinate ATP. Positions 26 and 29 each coordinate CTP. Asp-39 and Asp-41 together coordinate Mg(2+). Positions 110, 153, 156, 159, and 162 each coordinate ATP. Residues Arg-110, Asp-153, Arg-156, Arg-159, and Arg-162 each coordinate CTP.

It belongs to the tRNA nucleotidyltransferase/poly(A) polymerase family. Bacterial CCA-adding enzyme type 3 subfamily. As to quaternary structure, homodimer. The cofactor is Mg(2+).

It carries out the reaction a tRNA precursor + 2 CTP + ATP = a tRNA with a 3' CCA end + 3 diphosphate. The catalysed reaction is a tRNA with a 3' CCA end + 2 CTP + ATP = a tRNA with a 3' CCACCA end + 3 diphosphate. In terms of biological role, catalyzes the addition and repair of the essential 3'-terminal CCA sequence in tRNAs without using a nucleic acid template. Adds these three nucleotides in the order of C, C, and A to the tRNA nucleotide-73, using CTP and ATP as substrates and producing inorganic pyrophosphate. tRNA 3'-terminal CCA addition is required both for tRNA processing and repair. Also involved in tRNA surveillance by mediating tandem CCA addition to generate a CCACCA at the 3' terminus of unstable tRNAs. While stable tRNAs receive only 3'-terminal CCA, unstable tRNAs are marked with CCACCA and rapidly degraded. In Bacillus cereus (strain ATCC 10987 / NRS 248), this protein is CCA-adding enzyme.